The following is a 492-amino-acid chain: Glutamyl-tRNA(Gln) amidotransferase subunit A (492 aa).

Active-site charge relay system residues include K79 and S154. S178 functions as the Acyl-ester intermediate in the catalytic mechanism.

Belongs to the amidase family. GatA subfamily. As to quaternary structure, heterotrimer of A, B and C subunits.

The catalysed reaction is L-glutamyl-tRNA(Gln) + L-glutamine + ATP + H2O = L-glutaminyl-tRNA(Gln) + L-glutamate + ADP + phosphate + H(+). Functionally, allows the formation of correctly charged Gln-tRNA(Gln) through the transamidation of misacylated Glu-tRNA(Gln) in organisms which lack glutaminyl-tRNA synthetase. The reaction takes place in the presence of glutamine and ATP through an activated gamma-phospho-Glu-tRNA(Gln). The polypeptide is Glutamyl-tRNA(Gln) amidotransferase subunit A (Acinetobacter baumannii (strain ACICU)).